Consider the following 335-residue polypeptide: Nucleoid-associated protein PputW619_4243 (335 aa).

Belongs to the YejK family.

The protein localises to the cytoplasm. It is found in the nucleoid. The chain is Nucleoid-associated protein PputW619_4243 from Pseudomonas putida (strain W619).